The following is a 275-amino-acid chain: Large ribosomal subunit protein uL2 (275 aa).

A disordered region spans residues 224-275 (VMNPVDHPHGGGEGKSPIGRPSPVTPWGKPTLGYKTRKKNKASDKFIIKRRK). Residues 264-275 (KASDKFIIKRRK) are compositionally biased toward basic and acidic residues.

Belongs to the universal ribosomal protein uL2 family. Part of the 50S ribosomal subunit. Forms a bridge to the 30S subunit in the 70S ribosome.

In terms of biological role, one of the primary rRNA binding proteins. Required for association of the 30S and 50S subunits to form the 70S ribosome, for tRNA binding and peptide bond formation. It has been suggested to have peptidyltransferase activity; this is somewhat controversial. Makes several contacts with the 16S rRNA in the 70S ribosome. This Acetivibrio thermocellus (strain ATCC 27405 / DSM 1237 / JCM 9322 / NBRC 103400 / NCIMB 10682 / NRRL B-4536 / VPI 7372) (Clostridium thermocellum) protein is Large ribosomal subunit protein uL2.